The primary structure comprises 400 residues: Probable S-adenosylmethionine synthase (400 aa).

135–140 (KPGSKD) lines the ATP pocket.

It belongs to the AdoMet synthase 2 family. Requires Mg(2+) as cofactor.

The enzyme catalyses L-methionine + ATP + H2O = S-adenosyl-L-methionine + phosphate + diphosphate. The protein operates within amino-acid biosynthesis; S-adenosyl-L-methionine biosynthesis; S-adenosyl-L-methionine from L-methionine: step 1/1. In terms of biological role, catalyzes the formation of S-adenosylmethionine from methionine and ATP. This is Probable S-adenosylmethionine synthase (mat) from Aquifex aeolicus (strain VF5).